The sequence spans 244 residues: Protein-L-isoaspartate O-methyltransferase 2 (244 aa).

Residue Ser-88 is part of the active site.

This sequence belongs to the methyltransferase superfamily. L-isoaspartyl/D-aspartyl protein methyltransferase family.

It is found in the cytoplasm. The catalysed reaction is [protein]-L-isoaspartate + S-adenosyl-L-methionine = [protein]-L-isoaspartate alpha-methyl ester + S-adenosyl-L-homocysteine. Functionally, catalyzes the methyl esterification of L-isoaspartyl residues in peptides and proteins that result from spontaneous decomposition of normal L-aspartyl and L-asparaginyl residues. It plays a role in the repair and/or degradation of damaged proteins. The polypeptide is Protein-L-isoaspartate O-methyltransferase 2 (Shewanella sediminis (strain HAW-EB3)).